A 246-amino-acid chain; its full sequence is Putative F-box/LRR-repeat protein 9 (246 aa).

One can recognise an F-box domain in the interval 18 to 65 (YRNWAELPPELTSSILLRLGAIEILQNAQRVCKSWRRVCQDPSMWRKI).

The protein is Putative F-box/LRR-repeat protein 9 (FBL9) of Arabidopsis thaliana (Mouse-ear cress).